A 205-amino-acid chain; its full sequence is SCO2-like protein RC0895 (205 aa).

Cu cation is bound by residues cysteine 82, cysteine 86, and histidine 172.

It belongs to the SCO1/2 family.

The sequence is that of SCO2-like protein RC0895 from Rickettsia conorii (strain ATCC VR-613 / Malish 7).